Consider the following 336-residue polypeptide: tRNA(Ile)-lysidine synthase (336 aa).

32–37 (SGGQDS) is an ATP binding site.

It belongs to the tRNA(Ile)-lysidine synthase family.

It is found in the cytoplasm. The catalysed reaction is cytidine(34) in tRNA(Ile2) + L-lysine + ATP = lysidine(34) in tRNA(Ile2) + AMP + diphosphate + H(+). Ligates lysine onto the cytidine present at position 34 of the AUA codon-specific tRNA(Ile) that contains the anticodon CAU, in an ATP-dependent manner. Cytidine is converted to lysidine, thus changing the amino acid specificity of the tRNA from methionine to isoleucine. The protein is tRNA(Ile)-lysidine synthase of Synechococcus sp. (strain JA-3-3Ab) (Cyanobacteria bacterium Yellowstone A-Prime).